Consider the following 389-residue polypeptide: Cytochrome b (389 aa).

4 helical membrane passes run 32-52, 76-98, 113-133, and 179-199; these read FGSL…FLAM, WIVR…AHIG, LWSI…LGYV, and FFSL…AHFM. Heme b is bound by residues His-82 and His-96. His-183 and His-197 together coordinate heme b. A ubiquinone is bound at residue His-202. A run of 4 helical transmembrane segments spans residues 225–245, 289–309, 321–341, and 348–368; these read FIFK…VIVF, LLGV…PLTD, AMKF…WLGS, and YLEI…VIVP.

Belongs to the cytochrome b family. In terms of assembly, fungal cytochrome b-c1 complex contains 10 subunits; 3 respiratory subunits, 2 core proteins and 5 low-molecular weight proteins. Cytochrome b-c1 complex is a homodimer. Heme b serves as cofactor.

The protein localises to the mitochondrion inner membrane. Functionally, component of the ubiquinol-cytochrome c reductase complex (complex III or cytochrome b-c1 complex) that is part of the mitochondrial respiratory chain. The b-c1 complex mediates electron transfer from ubiquinol to cytochrome c. Contributes to the generation of a proton gradient across the mitochondrial membrane that is then used for ATP synthesis. In Strobilurus tenacellus, this protein is Cytochrome b (COB).